A 335-amino-acid polypeptide reads, in one-letter code: Dehydration-responsive element-binding protein 2A (335 aa).

Disordered regions lie at residues 1–32 and 50–74; these read MAVYDQSGDRNRTQIDTSRKRKSRSRGDGTTV and STKKRKVPAKGSKKGCMKGKGGPEN. The Nuclear localization signal signature appears at 19–55; the sequence is RKRKSRSRGDGTTVAERLKRWKEYNETVEEVSTKKRK. Residues 52–66 show a composition bias toward basic residues; the sequence is KKRKVPAKGSKKGCM. Residues 78 to 135 constitute a DNA-binding region (AP2/ERF); that stretch reads SFRGVRQRIWGKWVAEIREPNRGSRLWLGTFPTAQEAASAYDEAAKAMYGPLARLNFP. The tract at residues 279 to 304 is disordered; that stretch reads QDRYPGNSVANGSYRPESQQSGFDPL. Residues 286-304 are compositionally biased toward polar residues; it reads SVANGSYRPESQQSGFDPL.

It belongs to the AP2/ERF transcription factor family. ERF subfamily. In terms of assembly, interacts with MED25. Binds to DPB3-1 in the nucleus during heat-stress. Post-translationally, ubiquitinated by DRIP1 and DRIP2. Ubiquitination probably leads to its subsequent degradation, thus negatively regulating response to drought. In terms of tissue distribution, expressed preferentially in roots and stems, and at a lower level in leaves.

Its subcellular location is the nucleus. Its function is as follows. Transcriptional activator that binds specifically to the DNA sequence 5'-[AG]CCGAC-3'. Binding to the C-repeat/DRE element mediates high salinity- and dehydration-inducible transcription. Promotes the expression of heat stress-inducible genes by contributing to the formation of a heat stress-specific transcriptional complex with NF-Y subunits (e.g. DPB3-1, NF-YA2 and NF-YB3) at the promoter of target genes, thus promoting heat tolerance. This Arabidopsis thaliana (Mouse-ear cress) protein is Dehydration-responsive element-binding protein 2A.